We begin with the raw amino-acid sequence, 226 residues long: 2-C-methyl-D-erythritol 4-phosphate cytidylyltransferase (226 aa).

This sequence belongs to the IspD/TarI cytidylyltransferase family. IspD subfamily.

The enzyme catalyses 2-C-methyl-D-erythritol 4-phosphate + CTP + H(+) = 4-CDP-2-C-methyl-D-erythritol + diphosphate. It participates in isoprenoid biosynthesis; isopentenyl diphosphate biosynthesis via DXP pathway; isopentenyl diphosphate from 1-deoxy-D-xylulose 5-phosphate: step 2/6. In terms of biological role, catalyzes the formation of 4-diphosphocytidyl-2-C-methyl-D-erythritol from CTP and 2-C-methyl-D-erythritol 4-phosphate (MEP). This is 2-C-methyl-D-erythritol 4-phosphate cytidylyltransferase from Bacillus mycoides (strain KBAB4) (Bacillus weihenstephanensis).